A 100-amino-acid chain; its full sequence is Nucleoid-associated protein RoseRS_1534 (100 aa).

It belongs to the YbaB/EbfC family. Homodimer.

The protein resides in the cytoplasm. It localises to the nucleoid. Binds to DNA and alters its conformation. May be involved in regulation of gene expression, nucleoid organization and DNA protection. The chain is Nucleoid-associated protein RoseRS_1534 from Roseiflexus sp. (strain RS-1).